The following is a 265-amino-acid chain: Phosphatidylserine decarboxylase proenzyme (265 aa).

Ser-183 acts as the Schiff-base intermediate with substrate; via pyruvic acid in catalysis. A Pyruvic acid (Ser); by autocatalysis modification is found at Ser-183. The interval 216–246 (TAPQTESEPESEPALQTAPVETAANPSAEQR) is disordered.

Belongs to the phosphatidylserine decarboxylase family. PSD-A subfamily. In terms of assembly, heterodimer of a large membrane-associated beta subunit and a small pyruvoyl-containing alpha subunit. The cofactor is pyruvate. Is synthesized initially as an inactive proenzyme. Formation of the active enzyme involves a self-maturation process in which the active site pyruvoyl group is generated from an internal serine residue via an autocatalytic post-translational modification. Two non-identical subunits are generated from the proenzyme in this reaction, and the pyruvate is formed at the N-terminus of the alpha chain, which is derived from the carboxyl end of the proenzyme. The post-translation cleavage follows an unusual pathway, termed non-hydrolytic serinolysis, in which the side chain hydroxyl group of the serine supplies its oxygen atom to form the C-terminus of the beta chain, while the remainder of the serine residue undergoes an oxidative deamination to produce ammonia and the pyruvoyl prosthetic group on the alpha chain.

The protein localises to the cell membrane. It catalyses the reaction a 1,2-diacyl-sn-glycero-3-phospho-L-serine + H(+) = a 1,2-diacyl-sn-glycero-3-phosphoethanolamine + CO2. It participates in phospholipid metabolism; phosphatidylethanolamine biosynthesis; phosphatidylethanolamine from CDP-diacylglycerol: step 2/2. Functionally, catalyzes the formation of phosphatidylethanolamine (PtdEtn) from phosphatidylserine (PtdSer). The chain is Phosphatidylserine decarboxylase proenzyme from Neisseria meningitidis serogroup B (strain ATCC BAA-335 / MC58).